The chain runs to 203 residues: Holliday junction branch migration complex subunit RuvA (203 aa).

The domain I stretch occupies residues 1–64 (MIGRLRGIIL…EDAQLLYGFN (64 aa)). The segment at 65 to 142 (NKQERTLFKE…KGLHGDLFTP (78 aa)) is domain II. The tract at residues 143 to 154 (AADLVLTSPAGP) is flexible linker. Positions 155–203 (TADDAEQEAVAALVALGYKPQEASRMVSKIARPDANSETLIREALRAAL) are domain III.

This sequence belongs to the RuvA family. As to quaternary structure, homotetramer. Forms an RuvA(8)-RuvB(12)-Holliday junction (HJ) complex. HJ DNA is sandwiched between 2 RuvA tetramers; dsDNA enters through RuvA and exits via RuvB. An RuvB hexamer assembles on each DNA strand where it exits the tetramer. Each RuvB hexamer is contacted by two RuvA subunits (via domain III) on 2 adjacent RuvB subunits; this complex drives branch migration. In the full resolvosome a probable DNA-RuvA(4)-RuvB(12)-RuvC(2) complex forms which resolves the HJ.

Its subcellular location is the cytoplasm. In terms of biological role, the RuvA-RuvB-RuvC complex processes Holliday junction (HJ) DNA during genetic recombination and DNA repair, while the RuvA-RuvB complex plays an important role in the rescue of blocked DNA replication forks via replication fork reversal (RFR). RuvA specifically binds to HJ cruciform DNA, conferring on it an open structure. The RuvB hexamer acts as an ATP-dependent pump, pulling dsDNA into and through the RuvAB complex. HJ branch migration allows RuvC to scan DNA until it finds its consensus sequence, where it cleaves and resolves the cruciform DNA. The protein is Holliday junction branch migration complex subunit RuvA of Klebsiella pneumoniae (strain 342).